The following is a 151-amino-acid chain: MRVWIDADACPKMAKELVVKFALKRRFEVVLVAGQPQSKPALALVKLIVVPSGPDAADDYLVEHAVPGELVICSDIPLADRLVKKGVAALDPRGKEFDAQNMGERLATRNLFTDLREQGQVSGGPAPFGDREKQAFANALDRILTRLARQS.

Belongs to the UPF0178 family.

This Pseudomonas fluorescens (strain Pf0-1) protein is UPF0178 protein Pfl01_5469.